The primary structure comprises 84 residues: Sec-independent protein translocase protein TatA (84 aa).

A helical transmembrane segment spans residues 4 to 24 (MSPVHWLILAVVLLVVFGGGG). The interval 46–84 (DDESMTATDATQAPGHISPPNQNPGYSQTTSSETHRNQV) is disordered. Over residues 64–77 (PPNQNPGYSQTTSS) the composition is skewed to polar residues.

Belongs to the TatA/E family. In terms of assembly, the Tat system comprises two distinct complexes: a TatABC complex, containing multiple copies of TatA, TatB and TatC subunits, and a separate TatA complex, containing only TatA subunits. Substrates initially bind to the TatABC complex, which probably triggers association of the separate TatA complex to form the active translocon.

The protein localises to the cell inner membrane. Part of the twin-arginine translocation (Tat) system that transports large folded proteins containing a characteristic twin-arginine motif in their signal peptide across membranes. TatA could form the protein-conducting channel of the Tat system. This is Sec-independent protein translocase protein TatA from Gluconobacter oxydans (strain 621H) (Gluconobacter suboxydans).